The sequence spans 64 residues: Prokaryotic ubiquitin-like protein Pup (64 aa).

Positions 1–32 (MNAKQTQIMGGGGRDEDNAEDSAQASGQVQIN) are disordered. The interval 20 to 58 (EDSAQASGQVQINTEGVDSLLDEIDGLLENNAEEFVRSY) is ARC ATPase binding. Residues 21–32 (DSAQASGQVQIN) are compositionally biased toward polar residues. Glu-64 is covalently cross-linked (Isoglutamyl lysine isopeptide (Glu-Lys) (interchain with K-? in acceptor proteins)).

This sequence belongs to the prokaryotic ubiquitin-like protein family. In terms of assembly, strongly interacts with the proteasome-associated ATPase ARC through a hydrophobic interface; the interacting region of Pup lies in its C-terminal half. There is one Pup binding site per ARC hexamer ring.

It participates in protein degradation; proteasomal Pup-dependent pathway. Functionally, protein modifier that is covalently attached to lysine residues of substrate proteins, thereby targeting them for proteasomal degradation. The tagging system is termed pupylation. This chain is Prokaryotic ubiquitin-like protein Pup, found in Corynebacterium glutamicum (strain R).